A 270-amino-acid polypeptide reads, in one-letter code: 4-hydroxy-tetrahydrodipicolinate reductase (270 aa).

Residues 11–16 (GASGRM) and Glu37 contribute to the NAD(+) site. Residue Arg38 participates in NADP(+) binding. Residues 101-103 (GTT) and 125-128 (APNM) each bind NAD(+). Residue His158 is the Proton donor/acceptor of the active site. His159 contacts (S)-2,3,4,5-tetrahydrodipicolinate. Lys162 (proton donor) is an active-site residue. Residue 168–169 (GT) coordinates (S)-2,3,4,5-tetrahydrodipicolinate.

This sequence belongs to the DapB family.

It localises to the cytoplasm. It catalyses the reaction (S)-2,3,4,5-tetrahydrodipicolinate + NAD(+) + H2O = (2S,4S)-4-hydroxy-2,3,4,5-tetrahydrodipicolinate + NADH + H(+). The enzyme catalyses (S)-2,3,4,5-tetrahydrodipicolinate + NADP(+) + H2O = (2S,4S)-4-hydroxy-2,3,4,5-tetrahydrodipicolinate + NADPH + H(+). The protein operates within amino-acid biosynthesis; L-lysine biosynthesis via DAP pathway; (S)-tetrahydrodipicolinate from L-aspartate: step 4/4. Functionally, catalyzes the conversion of 4-hydroxy-tetrahydrodipicolinate (HTPA) to tetrahydrodipicolinate. The protein is 4-hydroxy-tetrahydrodipicolinate reductase of Shewanella amazonensis (strain ATCC BAA-1098 / SB2B).